Here is a 1958-residue protein sequence, read N- to C-terminus: Echinoderm microtubule-associated protein-like 6 (1958 aa).

WD repeat units follow at residues 59–100 (GHND…TVSI), 104–145 (VHTH…LLAS), 148–187 (GHSD…LTAK), 195–233 (GDLQ…RTIQ), 235–273 (AHSA…TKID), 280–321 (GYKG…LILQ), 323–362 (HCEG…LIAR), 364–403 (NMEE…EVVH), 406–445 (DRKE…KKIG), and 561–601 (GHSA…VSNG). The disordered stretch occupies residues 604-627 (ETTPQEGGADSYSEESDSDFSDVP). The segment covering 615–627 (YSEESDSDFSDVP) has biased composition (acidic residues). 10 WD repeats span residues 725-766 (GHDD…CLSL), 770-811 (HHQR…KIAT), 814-853 (GHKD…FTSK), 861-900 (GKLE…KTVK), 901-940 (AHDG…KTYA), 996-1035 (HMEG…RMLA), 1038-1077 (KLKK…DMLS), 1080-1120 (HRKE…RVGI), 1191-1230 (SDVT…QHAR), and 1236-1276 (GHSA…TQES). Residues 1322 to 1337 (KPHQQLKEVSMEERPP) show a composition bias toward basic and acidic residues. The disordered stretch occupies residues 1322–1352 (KPHQQLKEVSMEERPPVSRAAPQPEKLQKNN). WD repeat units follow at residues 1412–1456 (EHTD…TLSM), 1460–1501 (FHTK…KVAS), 1504–1543 (GHLE…LLYK), 1553–1591 (AKMQ…RLVA), 1593–1638 (AHTG…CRAF), 1685–1724 (HMEG…LLNK), 1726–1767 (NLGH…GKKR), 1768–1807 (DRKS…SLNR), 1880–1919 (ADKA…KFAK), and 1925–1958 (GHSA…WRCL).

It belongs to the WD repeat EMAP family.

It is found in the cytoplasm. It localises to the cytoskeleton. May modify the assembly dynamics of microtubules, such that microtubules are slightly longer, but more dynamic. The chain is Echinoderm microtubule-associated protein-like 6 (Eml6) from Mus musculus (Mouse).